Consider the following 139-residue polypeptide: Protein AC53 (139 aa).

It localises to the host cytoplasm. It is found in the host nucleus. In terms of biological role, plays a role in nucleocapsid assembly. In Lepidoptera (butterflies and moths), this protein is Protein AC53 (AC53).